The following is a 127-amino-acid chain: Putative pre-16S rRNA nuclease (127 aa).

The protein belongs to the YqgF nuclease family.

It localises to the cytoplasm. Functionally, could be a nuclease involved in processing of the 5'-end of pre-16S rRNA. The sequence is that of Putative pre-16S rRNA nuclease from Campylobacter jejuni subsp. jejuni serotype O:6 (strain 81116 / NCTC 11828).